The sequence spans 326 residues: Vitamin B12 import system permease protein BtuC (326 aa).

The next 9 membrane-spanning stretches (helical) occupy residues tryptophan 15–glutamate 35, leucine 61–phenylalanine 81, proline 88–glycine 108, leucine 112–leucine 132, leucine 146–phenylalanine 166, glycine 184–isoleucine 204, glycine 240–isoleucine 260, valine 274–alanine 294, and glutamate 302–leucine 322.

This sequence belongs to the binding-protein-dependent transport system permease family. FecCD subfamily. As to quaternary structure, the complex is composed of two ATP-binding proteins (BtuD), two transmembrane proteins (BtuC) and a solute-binding protein (BtuF).

It localises to the cell inner membrane. Its function is as follows. Part of the ABC transporter complex BtuCDF involved in vitamin B12 import. Involved in the translocation of the substrate across the membrane. The sequence is that of Vitamin B12 import system permease protein BtuC from Shigella boydii serotype 18 (strain CDC 3083-94 / BS512).